The primary structure comprises 456 residues: UDP-glycosyltransferase 74D1 (456 aa).

Residues serine 279, 332-334, 349-357, and 371-374 contribute to the UDP-alpha-D-glucose site; these read SPQ, HCGWNSTLE, and YSDQ.

This sequence belongs to the UDP-glycosyltransferase family. In terms of tissue distribution, expressed in leaves.

Functionally, glucosyltransferase that glucosylates jasmonate (JA) and JA derivatives. Also active on indole-3-acetic acid (IAA), 4-coumrate, cinnamate and caffeate. The sequence is that of UDP-glycosyltransferase 74D1 (UGT74D1) from Arabidopsis thaliana (Mouse-ear cress).